Consider the following 388-residue polypeptide: Succinate--CoA ligase [ADP-forming] subunit beta (388 aa).

The ATP-grasp domain occupies 9–244 (KALFAEYGLP…PSQDDAREAH (236 aa)). ATP contacts are provided by residues Lys46, 53-55 (GRG), Glu99, Thr102, and Glu107. Asn199 and Asp213 together coordinate Mg(2+). Substrate contacts are provided by residues Asn264 and 321–323 (GIV).

This sequence belongs to the succinate/malate CoA ligase beta subunit family. In terms of assembly, heterotetramer of two alpha and two beta subunits. The cofactor is Mg(2+).

It catalyses the reaction succinate + ATP + CoA = succinyl-CoA + ADP + phosphate. It carries out the reaction GTP + succinate + CoA = succinyl-CoA + GDP + phosphate. Its pathway is carbohydrate metabolism; tricarboxylic acid cycle; succinate from succinyl-CoA (ligase route): step 1/1. Its function is as follows. Succinyl-CoA synthetase functions in the citric acid cycle (TCA), coupling the hydrolysis of succinyl-CoA to the synthesis of either ATP or GTP and thus represents the only step of substrate-level phosphorylation in the TCA. The beta subunit provides nucleotide specificity of the enzyme and binds the substrate succinate, while the binding sites for coenzyme A and phosphate are found in the alpha subunit. The polypeptide is Succinate--CoA ligase [ADP-forming] subunit beta (Shewanella amazonensis (strain ATCC BAA-1098 / SB2B)).